The chain runs to 155 residues: Endoribonuclease YbeY (155 aa).

Zn(2+)-binding residues include histidine 114, histidine 118, and histidine 124.

Belongs to the endoribonuclease YbeY family. The cofactor is Zn(2+).

It is found in the cytoplasm. Functionally, single strand-specific metallo-endoribonuclease involved in late-stage 70S ribosome quality control and in maturation of the 3' terminus of the 16S rRNA. The protein is Endoribonuclease YbeY of Baumannia cicadellinicola subsp. Homalodisca coagulata.